The following is a 93-amino-acid chain: Cobalt transport protein CbiN (93 aa).

2 helical membrane passes run 5 to 25 (LMLLAMVVALVILPFFINHGG) and 63 to 83 (LLFTLQGSLGAAVIFYILGYC).

The protein belongs to the CbiN family. In terms of assembly, forms an energy-coupling factor (ECF) transporter complex composed of an ATP-binding protein (A component, CbiO), a transmembrane protein (T component, CbiQ) and 2 possible substrate-capture proteins (S components, CbiM and CbiN) of unknown stoichimetry.

The protein localises to the cell inner membrane. It participates in cofactor biosynthesis; adenosylcobalamin biosynthesis. In terms of biological role, part of the energy-coupling factor (ECF) transporter complex CbiMNOQ involved in cobalt import. The protein is Cobalt transport protein CbiN of Salmonella arizonae (strain ATCC BAA-731 / CDC346-86 / RSK2980).